The chain runs to 62 residues: Photosystem II reaction center protein Z (62 aa).

Helical transmembrane passes span 8-28 and 41-61; these read SVFA…VVLA and FSGA…NSLI.

It belongs to the PsbZ family. In terms of assembly, PSII is composed of 1 copy each of membrane proteins PsbA, PsbB, PsbC, PsbD, PsbE, PsbF, PsbH, PsbI, PsbJ, PsbK, PsbL, PsbM, PsbT, PsbY, PsbZ, Psb30/Ycf12, at least 3 peripheral proteins of the oxygen-evolving complex and a large number of cofactors. It forms dimeric complexes.

It localises to the plastid. It is found in the chloroplast thylakoid membrane. In terms of biological role, may control the interaction of photosystem II (PSII) cores with the light-harvesting antenna, regulates electron flow through the 2 photosystem reaction centers. PSII is a light-driven water plastoquinone oxidoreductase, using light energy to abstract electrons from H(2)O, generating a proton gradient subsequently used for ATP formation. This is Photosystem II reaction center protein Z from Psilotum nudum (Whisk fern).